Consider the following 126-residue polypeptide: Profilin-3 (126 aa).

It belongs to the profilin family. As to quaternary structure, occurs in many kinds of cells as a complex with monomeric actin in a 1:1 ratio. In embryos, expression is specifically detected in body wall muscle cells. In adults, expression is localized to a striking dot-like fashion in body wall muscle.

The protein localises to the cytoplasm. It is found in the cytoskeleton. Functionally, binds to actin and affects the structure of the cytoskeleton. At high concentrations, profilin prevents the polymerization of actin, whereas it enhances it at low concentrations. By binding to PIP2, it inhibits the formation of IP3 and DG. Also binds to poly(L-proline) and phosphatidylinositol 4,5-bisphosphate micelles. The polypeptide is Profilin-3 (pfn-3) (Caenorhabditis elegans).